We begin with the raw amino-acid sequence, 485 residues long: G2/mitotic-specific cyclin-A1 (485 aa).

Positions 1 to 24 are disordered; sequence MRSALSLKPSNGNAAKSQAVNNKN. Over residues 8-24 the composition is skewed to polar residues; sequence KPSNGNAAKSQAVNNKN.

This sequence belongs to the cyclin family. Cyclin AB subfamily. In terms of tissue distribution, expressed in the cell lineages ABarp, C and E as well as the NSM neuroblasts.

Functionally, involved in the control of the cell cycle after S phase. May bind to and activate cdk-1 and/or cdk-2 to promote cell cycle progression. Necessary for embryogenesis. The protein is G2/mitotic-specific cyclin-A1 (cya-1) of Caenorhabditis elegans.